The following is a 702-amino-acid chain: Elongation factor G (702 aa).

Positions 8–196 (ERYRNIGISA…MKAIIWDEAS (189 aa)) constitute a tr-type G domain. GTP is bound by residues 17–24 (AHIDAGKT), 88–92 (DTPGH), and 142–145 (NKMD).

The protein belongs to the TRAFAC class translation factor GTPase superfamily. Classic translation factor GTPase family. EF-G/EF-2 subfamily.

The protein localises to the cytoplasm. Its function is as follows. Catalyzes the GTP-dependent ribosomal translocation step during translation elongation. During this step, the ribosome changes from the pre-translocational (PRE) to the post-translocational (POST) state as the newly formed A-site-bound peptidyl-tRNA and P-site-bound deacylated tRNA move to the P and E sites, respectively. Catalyzes the coordinated movement of the two tRNA molecules, the mRNA and conformational changes in the ribosome. This is Elongation factor G (fusA) from Thiomonas delicata (Thiomonas cuprina).